The primary structure comprises 630 residues: UvrABC system protein C (630 aa).

The 80-residue stretch at 18-97 (TQSGVYLMKN…IKKHRPKYNI (80 aa)) folds into the GIY-YIG domain. In terms of domain architecture, UVR spans 207-242 (KKVIKSMTEKMMGAADEEKFEVAARLRDSIEAIKAI).

This sequence belongs to the UvrC family. Interacts with UvrB in an incision complex.

The protein resides in the cytoplasm. In terms of biological role, the UvrABC repair system catalyzes the recognition and processing of DNA lesions. UvrC both incises the 5' and 3' sides of the lesion. The N-terminal half is responsible for the 3' incision and the C-terminal half is responsible for the 5' incision. The polypeptide is UvrABC system protein C (Bdellovibrio bacteriovorus (strain ATCC 15356 / DSM 50701 / NCIMB 9529 / HD100)).